The following is a 158-amino-acid chain: uncharacterized protein (158 aa).

A compositionally biased stretch (polar residues) spans 1–21 (MPHTGSQHTLQATPKTAQHTG). Disordered stretches follow at residues 1-89 (MPHT…RVEG) and 107-158 (EEEK…DAKT). Composition is skewed to basic and acidic residues over residues 51–68 (HTEGCHTQKTRMSADKAG) and 107–127 (EEEKASGEARGEDVGSSRESR). Positions 128–137 (QGTAHKSTCM) are enriched in polar residues. A compositionally biased stretch (basic and acidic residues) spans 149-158 (EIGKVEDAKT).

This is an uncharacterized protein from Encephalitozoon cuniculi (strain GB-M1) (Microsporidian parasite).